The sequence spans 126 residues: Large ribosomal subunit protein bL17 (126 aa).

It belongs to the bacterial ribosomal protein bL17 family. Part of the 50S ribosomal subunit. Contacts protein L32.

The chain is Large ribosomal subunit protein bL17 from Rickettsia felis (strain ATCC VR-1525 / URRWXCal2) (Rickettsia azadi).